The primary structure comprises 47 residues: Large ribosomal subunit protein bL34 (47 aa).

The protein belongs to the bacterial ribosomal protein bL34 family.

The sequence is that of Large ribosomal subunit protein bL34 from Rhodococcus erythropolis (strain PR4 / NBRC 100887).